A 1060-amino-acid chain; its full sequence is Carbamoyl phosphate synthase large chain (1060 aa).

Residues 1–401 are carboxyphosphate synthetic domain; the sequence is MPKRTDIRKI…SLLKACRSLE (401 aa). The ATP site is built by arginine 129, arginine 169, glycine 175, glycine 176, arginine 208, isoleucine 210, glutamate 215, glycine 241, isoleucine 242, histidine 243, glutamine 284, and glutamate 298. Residues 133-327 enclose the ATP-grasp 1 domain; sequence KQLMEELNQP…IAKLAAKIAV (195 aa). The Mg(2+) site is built by glutamine 284, glutamate 298, and asparagine 300. Residues glutamine 284, glutamate 298, and asparagine 300 each contribute to the Mn(2+) site. Residues 402–546 form an oligomerization domain region; the sequence is IGVDHIKIAD…YSTYAVENES (145 aa). A carbamoyl phosphate synthetic domain region spans residues 547 to 929; it reads LISDKASILV…ALYKAFEAAY (383 aa). In terms of domain architecture, ATP-grasp 2 spans 671-861; it reads EATLQALNIP…MAQVATKVIL (191 aa). ATP contacts are provided by arginine 707, alanine 746, leucine 748, glutamate 752, glycine 777, valine 778, histidine 779, serine 780, glutamine 820, and glutamate 832. Mg(2+) contacts are provided by glutamine 820, glutamate 832, and asparagine 834. The Mn(2+) site is built by glutamine 820, glutamate 832, and asparagine 834. The region spanning 930-1060 is the MGS-like domain; the sequence is LHMPDYGNIV…SRAFTLKVLD (131 aa). The segment at 930-1060 is allosteric domain; the sequence is LHMPDYGNIV…SRAFTLKVLD (131 aa).

It belongs to the CarB family. In terms of assembly, composed of two chains; the small (or glutamine) chain promotes the hydrolysis of glutamine to ammonia, which is used by the large (or ammonia) chain to synthesize carbamoyl phosphate. Tetramer of heterodimers (alpha,beta)4. Mg(2+) serves as cofactor. The cofactor is Mn(2+).

It catalyses the reaction hydrogencarbonate + L-glutamine + 2 ATP + H2O = carbamoyl phosphate + L-glutamate + 2 ADP + phosphate + 2 H(+). The enzyme catalyses hydrogencarbonate + NH4(+) + 2 ATP = carbamoyl phosphate + 2 ADP + phosphate + 2 H(+). It functions in the pathway amino-acid biosynthesis; L-arginine biosynthesis; carbamoyl phosphate from bicarbonate: step 1/1. The protein operates within pyrimidine metabolism; UMP biosynthesis via de novo pathway; (S)-dihydroorotate from bicarbonate: step 1/3. In terms of biological role, large subunit of the glutamine-dependent carbamoyl phosphate synthetase (CPSase). CPSase catalyzes the formation of carbamoyl phosphate from the ammonia moiety of glutamine, carbonate, and phosphate donated by ATP, constituting the first step of 2 biosynthetic pathways, one leading to arginine and/or urea and the other to pyrimidine nucleotides. The large subunit (synthetase) binds the substrates ammonia (free or transferred from glutamine from the small subunit), hydrogencarbonate and ATP and carries out an ATP-coupled ligase reaction, activating hydrogencarbonate by forming carboxy phosphate which reacts with ammonia to form carbamoyl phosphate. In Streptococcus agalactiae serotype V (strain ATCC BAA-611 / 2603 V/R), this protein is Carbamoyl phosphate synthase large chain.